The chain runs to 210 residues: Casparian strip membrane protein 1 (210 aa).

The segment at 1-25 (MEKSEATTIDVAETSRESKGKAPLL) is disordered. Residues 1–48 (MEKSEATTIDVAETSRESKGKAPLLRDPPAWVPAAVERQRAAPAYKRG) lie on the Cytoplasmic side of the membrane. A helical membrane pass occupies residues 49–69 (VAIFDLILRISAATAALAATI). At 70 to 98 (TMGTTEQTLPFFTQFFQFQASYDDLPTFT) the chain is on the extracellular side. A helical membrane pass occupies residues 99 to 119 (FFVIAMSIVTGYLVLSVPFSI). At 120 to 138 (VCIARPVAAAPRLLLILCD) the chain is on the cytoplasmic side. A helical membrane pass occupies residues 139 to 159 (TLAVTLNTSAAGASAAIVYLA). The Extracellular segment spans residues 160–183 (HNGNSDANWLAICQQFNDFCQRTS). A helical transmembrane segment spans residues 184–204 (GAVVASFVAVVLLIFLVVLSA). Topologically, residues 205 to 210 (SALKKH) are cytoplasmic.

The protein belongs to the Casparian strip membrane proteins (CASP) family. Homodimer and heterodimers.

Its subcellular location is the cell membrane. Functionally, regulates membrane-cell wall junctions and localized cell wall deposition. Required for establishment of the Casparian strip membrane domain (CSD) and the subsequent formation of Casparian strips, a cell wall modification of the root endodermis that determines an apoplastic barrier between the intraorganismal apoplasm and the extraorganismal apoplasm and prevents lateral diffusion. The chain is Casparian strip membrane protein 1 from Erythranthe guttata (Yellow monkey flower).